A 483-amino-acid chain; its full sequence is Iroquois-class homeodomain protein IRX-5 (483 aa).

Residues Asp-113–Asn-175 constitute a DNA-binding region (homeobox; TALE-type). 2 disordered regions span residues Met-177–Phe-392 and Gly-423–Leu-442. Residues Glu-186–Glu-203 show a composition bias toward acidic residues. 2 stretches are compositionally biased toward basic and acidic residues: residues Pro-204 to Pro-213 and Ser-250 to Leu-261. Composition is skewed to low complexity over residues Gly-266–Arg-282 and Ser-374–Ala-388. Ser-274 bears the Phosphoserine mark. Phosphoserine is present on Ser-464.

The protein belongs to the TALE/IRO homeobox family.

It is found in the nucleus. Functionally, establishes the cardiac repolarization gradient by its repressive actions on the KCND2 potassium-channel gene. Required for retinal cone bipolar cell differentiation. May regulate contrast adaptation in the retina and control specific aspects of visual function in circuits of the mammalian retina. Could be involved in the regulation of both the cell cycle and apoptosis in prostate cancer cells. Involved in craniofacial and gonadal development. Modulates the migration of progenitor cell populations in branchial arches and gonads by repressing CXCL12. The chain is Iroquois-class homeodomain protein IRX-5 (IRX5) from Homo sapiens (Human).